A 298-amino-acid polypeptide reads, in one-letter code: 33 kDa chaperonin (298 aa).

Cystine bridges form between Cys-237/Cys-239 and Cys-270/Cys-273.

This sequence belongs to the HSP33 family. Post-translationally, under oxidizing conditions two disulfide bonds are formed involving the reactive cysteines. Under reducing conditions zinc is bound to the reactive cysteines and the protein is inactive.

It localises to the cytoplasm. Its function is as follows. Redox regulated molecular chaperone. Protects both thermally unfolding and oxidatively damaged proteins from irreversible aggregation. Plays an important role in the bacterial defense system toward oxidative stress. This chain is 33 kDa chaperonin, found in Enterococcus faecalis (strain ATCC 700802 / V583).